Here is a 331-residue protein sequence, read N- to C-terminus: NADH-quinone oxidoreductase subunit H (331 aa).

8 consecutive transmembrane segments (helical) span residues 13 to 33, 80 to 100, 113 to 133, 159 to 179, 183 to 203, 249 to 269, 273 to 293, and 311 to 331; these read FLIS…VLTL, WVFL…WLVI, IGLV…IMAG, LILS…VDIV, AGGF…AFFV, VMSA…LPFL, VFNW…FQWI, and KILV…MLVI.

This sequence belongs to the complex I subunit 1 family. NDH-1 is composed of 14 different subunits. Subunits NuoA, H, J, K, L, M, N constitute the membrane sector of the complex.

It is found in the cell membrane. It catalyses the reaction a quinone + NADH + 5 H(+)(in) = a quinol + NAD(+) + 4 H(+)(out). Its function is as follows. NDH-1 shuttles electrons from NADH, via FMN and iron-sulfur (Fe-S) centers, to quinones in the respiratory chain. The immediate electron acceptor for the enzyme in this species is believed to be ubiquinone. Couples the redox reaction to proton translocation (for every two electrons transferred, four hydrogen ions are translocated across the cytoplasmic membrane), and thus conserves the redox energy in a proton gradient. This subunit may bind ubiquinone. The sequence is that of NADH-quinone oxidoreductase subunit H from Rubrobacter xylanophilus (strain DSM 9941 / JCM 11954 / NBRC 16129 / PRD-1).